A 243-amino-acid chain; its full sequence is ATP synthase subunit a (243 aa).

Transmembrane regions (helical) follow at residues asparagine 29–leucine 49, isoleucine 54–isoleucine 74, valine 89–phenylalanine 109, histidine 114–phenylalanine 134, isoleucine 144–phenylalanine 164, isoleucine 182–leucine 202, and alanine 208–phenylalanine 228.

Belongs to the ATPase A chain family. As to quaternary structure, F-type ATPases have 2 components, CF(1) - the catalytic core - and CF(0) - the membrane proton channel. CF(1) has five subunits: alpha(3), beta(3), gamma(1), delta(1), epsilon(1). CF(0) has three main subunits: a(1), b(2) and c(9-12). The alpha and beta chains form an alternating ring which encloses part of the gamma chain. CF(1) is attached to CF(0) by a central stalk formed by the gamma and epsilon chains, while a peripheral stalk is formed by the delta and b chains.

The protein resides in the cell inner membrane. Functionally, key component of the proton channel; it plays a direct role in the translocation of protons across the membrane. The chain is ATP synthase subunit a from Ehrlichia chaffeensis (strain ATCC CRL-10679 / Arkansas).